The following is a 473-amino-acid chain: MAQAAAAPADNTKKLWGGRFTGKTDPLMEKFNESLPFDKRLWAEDIKGSQAYAKALAKAGILAHDEAVTIVEGLAKVAEEWKAGAFVIKAGDEDIHTANERRLTELVGAVGGKLHTGRSRNDQVATDYRLWLVGQVEVMRSEVGELMRVAADRSEAEVEVLMPGFTHLQNAMTVRWSHWLMSHAAAWQRDDMRLRDLLPRVATLPLGSGALAGNPFLVDRQFIAKELGFGGGVCPNSMDAVSDRDFVIETVFAASLLCVHLSRWAEDLIIYSSGPFGYVQCSDAYATGSSLMPQKKNPDALELIRGKGGRVQGNLMGVMAVLKGTPTTYNKDFQECWELLFDTVDTVHDVVRIATGVLSTLRIKPDRMKAGLSADMLATDLAEYLVRKGVPFRETHHHSGAAVKMAEDRGCTLFDLTVDDLKTIHPLFTDDVAAVWDFNRSAEMRDTEGGTSKRSVLEQVQKMRTYLAAEGQH.

3 residues coordinate 2-(N(omega)-L-arginino)succinate: Ser34, Asn121, and Thr166. His167 functions as the Proton acceptor in the catalytic mechanism. Residue Ser289 is the Proton donor of the active site. 2-(N(omega)-L-arginino)succinate is bound by residues Asn297, Tyr329, and Gln334.

This sequence belongs to the lyase 1 family. Argininosuccinate lyase subfamily.

It catalyses the reaction 2-(N(omega)-L-arginino)succinate = fumarate + L-arginine. It functions in the pathway amino-acid biosynthesis; L-arginine biosynthesis; L-arginine from L-ornithine and carbamoyl phosphate: step 3/3. The sequence is that of Argininosuccinate lyase (ARG7) from Chlamydomonas reinhardtii (Chlamydomonas smithii).